We begin with the raw amino-acid sequence, 140 residues long: Iron sulfur cluster assembly protein 1 (140 aa).

Belongs to the NifU family. As to quaternary structure, component of the core Fe-S cluster (ISC) assembly machinery. [2Fe-2S] cluster is required as a cofactor.

It is found in the mitosome matrix. Its pathway is cofactor biosynthesis; iron-sulfur cluster biosynthesis. In terms of biological role, scaffold protein for the de novo synthesis of iron-sulfur (Fe-S) clusters within mitosomes, which is required for maturation of both [2Fe-2S] and [4Fe-4S] proteins. First, a [2Fe-2S] cluster is transiently assembled on the scaffold protein ISU1. In a second step, the cluster is released from ISU1, transferred to a glutaredoxin, followed by the formation of [2Fe-2S] proteins, the synthesis of [4Fe-4S] clusters and their target-specific insertion into the recipient apoproteins. Cluster assembly on ISU1 depends on the function of the cysteine desulfurase complex NFS1-ISD11, which serves as the sulfur donor for cluster synthesis, the iron-binding protein frataxin as the putative iron donor, and the electron transfer chain comprised of ferredoxin reductase and ferredoxin, which receive their electrons from NADH. This Encephalitozoon cuniculi (strain GB-M1) (Microsporidian parasite) protein is Iron sulfur cluster assembly protein 1 (ISU1).